Consider the following 221-residue polypeptide: Vesicle transport v-SNARE 13 (221 aa).

The Cytoplasmic segment spans residues 1–198 (MSQGFERYER…MTRRMNRNKW (198 aa)). Positions 32 to 93 (EQKKQNLSEI…FKTEVKRITS (62 aa)) form a coiled coil. The helical; Anchor for type IV membrane protein transmembrane segment at 199-219 (TIGAIITVLVLAIIFILYFKL) threads the bilayer. Over 220–221 (TR) the chain is Vesicular.

It belongs to the VTI1 family. In terms of assembly, forms SNARE complexes with t-SNAREs. In terms of tissue distribution, expressed at low levels in roots, stems, flowers and leaves.

It is found in the vacuole membrane. It localises to the prevacuolar compartment membrane. Its subcellular location is the endosome membrane. The protein localises to the early endosome membrane. Its function is as follows. May function as a v-SNARE responsible for targeting vesicles involved in the secretory pathway. Involved in actin-dependent endosomal trafficking pathways associated with the vacuole within root hairs and root tip epidermal cells. Essential for cell wall organization and polarized root hair growth. Also required for the localization of SYP41 to the trans-Golgi network in root hair cells. This chain is Vesicle transport v-SNARE 13, found in Arabidopsis thaliana (Mouse-ear cress).